A 381-amino-acid polypeptide reads, in one-letter code: Succinyl-diaminopimelate desuccinylase (381 aa).

Position 71 (H71) interacts with Zn(2+). Residue D73 is part of the active site. A Zn(2+)-binding site is contributed by D104. The Proton acceptor role is filled by E138. E139, E167, and H353 together coordinate Zn(2+).

It belongs to the peptidase M20A family. DapE subfamily. In terms of assembly, homodimer. Requires Zn(2+) as cofactor. The cofactor is Co(2+).

The enzyme catalyses N-succinyl-(2S,6S)-2,6-diaminopimelate + H2O = (2S,6S)-2,6-diaminopimelate + succinate. The protein operates within amino-acid biosynthesis; L-lysine biosynthesis via DAP pathway; LL-2,6-diaminopimelate from (S)-tetrahydrodipicolinate (succinylase route): step 3/3. Functionally, catalyzes the hydrolysis of N-succinyl-L,L-diaminopimelic acid (SDAP), forming succinate and LL-2,6-diaminopimelate (DAP), an intermediate involved in the bacterial biosynthesis of lysine and meso-diaminopimelic acid, an essential component of bacterial cell walls. The chain is Succinyl-diaminopimelate desuccinylase from Shewanella pealeana (strain ATCC 700345 / ANG-SQ1).